A 375-amino-acid polypeptide reads, in one-letter code: POU domain, class 3, transcription factor 1-B (375 aa).

Disordered stretches follow at residues 1–29 (MAAT…RMHQ), 56–139 (MSLT…QPLI), and 151–200 (MLGP…PSSD). Composition is skewed to polar residues over residues 107–117 (VHQQTPSSHAW), 129–139 (SPGSNSHQPLI), and 151–160 (MLGPQASSLH). The span at 162-178 (SMRDPLHDDPGVHDTHV) shows a compositional bias: basic and acidic residues. A POU-specific domain is found at 194–268 (EDAPSSDDLE…LLNKWLEETD (75 aa)). Residues 286–345 (KRKKRTSIEVGVKGALENHFLKCPKPSAHEITSLADSLQLEKEVVRVWFCNRRQKEKRMT) constitute a DNA-binding region (homeobox).

The protein belongs to the POU transcription factor family. Class-3 subfamily.

It localises to the nucleus. Acts as a transcription factor. May play a role in neuronal differentiation. This is POU domain, class 3, transcription factor 1-B (pou3f1-b) from Xenopus laevis (African clawed frog).